The sequence spans 137 residues: Phosphoribosyl-ATP pyrophosphatase (137 aa).

The segment covering 114-124 (EGTSGIEEKAL) has biased composition (basic and acidic residues). Residues 114–137 (EGTSGIEEKALRKSLQRAAEEAQP) form a disordered region.

The protein belongs to the PRA-PH family.

It localises to the cytoplasm. The enzyme catalyses 1-(5-phospho-beta-D-ribosyl)-ATP + H2O = 1-(5-phospho-beta-D-ribosyl)-5'-AMP + diphosphate + H(+). Its pathway is amino-acid biosynthesis; L-histidine biosynthesis; L-histidine from 5-phospho-alpha-D-ribose 1-diphosphate: step 2/9. In Paracidovorax citrulli (strain AAC00-1) (Acidovorax citrulli), this protein is Phosphoribosyl-ATP pyrophosphatase.